The primary structure comprises 96 residues: MTMDTAQLKSQIQQYLVESGNYELISNELKARLLQEGWVDKVKDLTKSEMNINESTNFTQILSTVEPKALEIVSDSTRETVLKQIREFLEGIVDTQ.

Residue Lys-68 forms a Glycyl lysine isopeptide (Lys-Gly) (interchain with G-Cter in ubiquitin) linkage.

This sequence belongs to the ENY2 family. Component of the nuclear pore complex (NPC)-associated TREX-2 complex (transcription and export complex 2), composed of at least SUS1, SAC3, THP1, SEM1, and CDC31. TREX-2 contains 2 SUS1 chains. The TREX-2 complex interacts with the nucleoporin NUP1. Component of the 1.8 MDa SAGA transcription coactivator-HAT complex. SAGA is built of 5 distinct domains with specialized functions. Within the SAGA complex, SUS1, SGF11, SGF73 and UBP8 form an additional subcomplex of SAGA called the DUB module (deubiquitination module). Interacts directly with THP1, SAC3, SGF11, and with the RNA polymerase II.

The protein resides in the nucleus. It localises to the nucleoplasm. Its subcellular location is the cytoplasm. The protein localises to the P-body. Functionally, involved in mRNA export coupled transcription activation by association with both the TREX-2 and the SAGA complexes. At the promoters, SAGA is required for recruitment of the basal transcription machinery. It influences RNA polymerase II transcriptional activity through different activities such as TBP interaction and promoter selectivity, interaction with transcription activators, and chromatin modification through histone acetylation and deubiquitination. Within the SAGA complex, participates in a subcomplex required for deubiquitination of H2B and for the maintenance of steady-state H3 methylation levels. The TREX-2 complex functions in docking export-competent ribonucleoprotein particles (mRNPs) to the nuclear entrance of the nuclear pore complex (nuclear basket). TREX-2 participates in mRNA export and accurate chromatin positioning in the nucleus by tethering genes to the nuclear periphery. May also be involved in cytoplasmic mRNA decay by interaction with components of P-bodies. The chain is Transcription and mRNA export factor SUS1 from Saccharomyces cerevisiae (strain YJM789) (Baker's yeast).